The following is a 636-amino-acid chain: 1-deoxy-D-xylulose-5-phosphate synthase (636 aa).

Thiamine diphosphate contacts are provided by residues histidine 74 and 115–117 (GHA). Aspartate 146 serves as a coordination point for Mg(2+). Residues 147 to 148 (GA), asparagine 175, tyrosine 285, and glutamate 368 each bind thiamine diphosphate. Asparagine 175 lines the Mg(2+) pocket.

The protein belongs to the transketolase family. DXPS subfamily. In terms of assembly, homodimer. The cofactor is Mg(2+). Requires thiamine diphosphate as cofactor.

It carries out the reaction D-glyceraldehyde 3-phosphate + pyruvate + H(+) = 1-deoxy-D-xylulose 5-phosphate + CO2. It functions in the pathway metabolic intermediate biosynthesis; 1-deoxy-D-xylulose 5-phosphate biosynthesis; 1-deoxy-D-xylulose 5-phosphate from D-glyceraldehyde 3-phosphate and pyruvate: step 1/1. Functionally, catalyzes the acyloin condensation reaction between C atoms 2 and 3 of pyruvate and glyceraldehyde 3-phosphate to yield 1-deoxy-D-xylulose-5-phosphate (DXP). In Anaeromyxobacter dehalogenans (strain 2CP-C), this protein is 1-deoxy-D-xylulose-5-phosphate synthase.